The primary structure comprises 262 residues: Vibriobactin-specific 2,3-dihydro-2,3-dihydroxybenzoate dehydrogenase (262 aa).

An NAD(+)-binding site is contributed by 12 to 36 (LLVGSARGIGFSVLEHLLQAGAQVM). Residue serine 145 participates in substrate binding. Tyrosine 158 (proton acceptor) is an active-site residue.

The protein belongs to the short-chain dehydrogenases/reductases (SDR) family.

It catalyses the reaction (2S,3S)-2,3-dihydroxy-2,3-dihydrobenzoate + NAD(+) = 2,3-dihydroxybenzoate + NADH + H(+). Its pathway is siderophore biosynthesis; vibriobactin biosynthesis. Functionally, involved in an early step of the biosynthesis of the catechol siderophore vibriobactin. Vibriobactin is a chelating compound involved in transporting iron from the bacterial environment into the cell cytoplasm. The polypeptide is Vibriobactin-specific 2,3-dihydro-2,3-dihydroxybenzoate dehydrogenase (vibA) (Vibrio cholerae serotype O1 (strain ATCC 39315 / El Tor Inaba N16961)).